Reading from the N-terminus, the 301-residue chain is GTP cyclohydrolase FolE2 (301 aa).

The protein belongs to the GTP cyclohydrolase IV family.

It catalyses the reaction GTP + H2O = 7,8-dihydroneopterin 3'-triphosphate + formate + H(+). It functions in the pathway cofactor biosynthesis; 7,8-dihydroneopterin triphosphate biosynthesis; 7,8-dihydroneopterin triphosphate from GTP: step 1/1. In terms of biological role, converts GTP to 7,8-dihydroneopterin triphosphate. This chain is GTP cyclohydrolase FolE2, found in Pseudomonas savastanoi pv. phaseolicola (strain 1448A / Race 6) (Pseudomonas syringae pv. phaseolicola (strain 1448A / Race 6)).